Here is a 378-residue protein sequence, read N- to C-terminus: Ribosomal RNA large subunit methyltransferase G (378 aa).

This sequence belongs to the methyltransferase superfamily. RlmG family.

Its subcellular location is the cytoplasm. It catalyses the reaction guanosine(1835) in 23S rRNA + S-adenosyl-L-methionine = N(2)-methylguanosine(1835) in 23S rRNA + S-adenosyl-L-homocysteine + H(+). In terms of biological role, specifically methylates the guanine in position 1835 (m2G1835) of 23S rRNA. The chain is Ribosomal RNA large subunit methyltransferase G from Salmonella dublin (strain CT_02021853).